We begin with the raw amino-acid sequence, 380 residues long: Succinate--CoA ligase [ADP-forming] subunit beta (380 aa).

Residues Arg-9–Arg-237 enclose the ATP-grasp domain. ATP-binding positions include Lys-45, Gly-52–Gly-54, Val-94, and Glu-99. Asn-192 and Asp-206 together coordinate Mg(2+). Substrate-binding positions include Asn-257 and Gly-314–Thr-316.

It belongs to the succinate/malate CoA ligase beta subunit family. As to quaternary structure, heterotetramer of two alpha and two beta subunits. Requires Mg(2+) as cofactor.

It carries out the reaction succinate + ATP + CoA = succinyl-CoA + ADP + phosphate. The catalysed reaction is GTP + succinate + CoA = succinyl-CoA + GDP + phosphate. Its pathway is carbohydrate metabolism; tricarboxylic acid cycle; succinate from succinyl-CoA (ligase route): step 1/1. In terms of biological role, succinyl-CoA synthetase functions in the citric acid cycle (TCA), coupling the hydrolysis of succinyl-CoA to the synthesis of either ATP or GTP and thus represents the only step of substrate-level phosphorylation in the TCA. The beta subunit provides nucleotide specificity of the enzyme and binds the substrate succinate, while the binding sites for coenzyme A and phosphate are found in the alpha subunit. This chain is Succinate--CoA ligase [ADP-forming] subunit beta, found in Chloroflexus aurantiacus (strain ATCC 29366 / DSM 635 / J-10-fl).